The chain runs to 347 residues: N-acetyl-gamma-glutamyl-phosphate reductase (347 aa).

Cys152 is an active-site residue.

It belongs to the NAGSA dehydrogenase family. Type 1 subfamily.

Its subcellular location is the cytoplasm. It carries out the reaction N-acetyl-L-glutamate 5-semialdehyde + phosphate + NADP(+) = N-acetyl-L-glutamyl 5-phosphate + NADPH + H(+). The protein operates within amino-acid biosynthesis; L-arginine biosynthesis; N(2)-acetyl-L-ornithine from L-glutamate: step 3/4. Catalyzes the NADPH-dependent reduction of N-acetyl-5-glutamyl phosphate to yield N-acetyl-L-glutamate 5-semialdehyde. In Neisseria meningitidis serogroup C / serotype 2a (strain ATCC 700532 / DSM 15464 / FAM18), this protein is N-acetyl-gamma-glutamyl-phosphate reductase.